A 591-amino-acid polypeptide reads, in one-letter code: V-type ATP synthase alpha chain (591 aa).

242–249 (GPFGAGKT) contacts ATP.

The protein belongs to the ATPase alpha/beta chains family.

It catalyses the reaction ATP + H2O + 4 H(+)(in) = ADP + phosphate + 5 H(+)(out). Produces ATP from ADP in the presence of a proton gradient across the membrane. The V-type alpha chain is a catalytic subunit. The sequence is that of V-type ATP synthase alpha chain from Chlamydia trachomatis serovar A (strain ATCC VR-571B / DSM 19440 / HAR-13).